The primary structure comprises 260 residues: Imidazole glycerol phosphate synthase subunit HisF (260 aa).

Catalysis depends on residues D12 and D131.

It belongs to the HisA/HisF family. In terms of assembly, heterodimer of HisH and HisF.

The protein resides in the cytoplasm. It carries out the reaction 5-[(5-phospho-1-deoxy-D-ribulos-1-ylimino)methylamino]-1-(5-phospho-beta-D-ribosyl)imidazole-4-carboxamide + L-glutamine = D-erythro-1-(imidazol-4-yl)glycerol 3-phosphate + 5-amino-1-(5-phospho-beta-D-ribosyl)imidazole-4-carboxamide + L-glutamate + H(+). Its pathway is amino-acid biosynthesis; L-histidine biosynthesis; L-histidine from 5-phospho-alpha-D-ribose 1-diphosphate: step 5/9. Its function is as follows. IGPS catalyzes the conversion of PRFAR and glutamine to IGP, AICAR and glutamate. The HisF subunit catalyzes the cyclization activity that produces IGP and AICAR from PRFAR using the ammonia provided by the HisH subunit. The polypeptide is Imidazole glycerol phosphate synthase subunit HisF (Corynebacterium jeikeium (strain K411)).